The chain runs to 217 residues: Chaperone protein TorD (217 aa).

Belongs to the TorD/DmsD family. TorD subfamily.

The protein localises to the cytoplasm. Involved in the biogenesis of TorA. Acts on TorA before the insertion of the molybdenum cofactor and, as a result, probably favors a conformation of the apoenzyme that is competent for acquiring the cofactor. This chain is Chaperone protein TorD, found in Shewanella oneidensis (strain ATCC 700550 / JCM 31522 / CIP 106686 / LMG 19005 / NCIMB 14063 / MR-1).